We begin with the raw amino-acid sequence, 133 residues long: Ribonuclease VapC28 (133 aa).

Residues 1–124 (MIVDTSAIIA…LWKGNDFGHT (124 aa)) form the PINc domain. Asp4 and Asp100 together coordinate Mg(2+).

The protein belongs to the PINc/VapC protein family. Mg(2+) serves as cofactor.

Toxic component of a type II toxin-antitoxin (TA) system. An RNase. Upon expression in M.smegmatis inhibits colony formation. Its toxic effect is neutralized by coexpression with cognate antitoxin VapB28. This is Ribonuclease VapC28 from Mycobacterium tuberculosis (strain ATCC 25618 / H37Rv).